The sequence spans 1201 residues: DNA-directed RNA polymerase subunit beta' (1201 aa).

Zn(2+) is bound by residues Cys60, Cys62, Cys75, and Cys78. Mg(2+) contacts are provided by Asp449, Asp451, and Asp453. Zn(2+)-binding residues include Cys818, Cys892, Cys899, and Cys902.

Belongs to the RNA polymerase beta' chain family. In terms of assembly, the RNAP catalytic core consists of 2 alpha, 1 beta, 1 beta' and 1 omega subunit. When a sigma factor is associated with the core the holoenzyme is formed, which can initiate transcription. Mg(2+) serves as cofactor. The cofactor is Zn(2+).

It carries out the reaction RNA(n) + a ribonucleoside 5'-triphosphate = RNA(n+1) + diphosphate. DNA-dependent RNA polymerase catalyzes the transcription of DNA into RNA using the four ribonucleoside triphosphates as substrates. This Listeria monocytogenes serotype 4b (strain F2365) protein is DNA-directed RNA polymerase subunit beta'.